The chain runs to 296 residues: Elongation factor Ts (296 aa).

The involved in Mg(2+) ion dislocation from EF-Tu stretch occupies residues T79–V82.

The protein belongs to the EF-Ts family.

The protein localises to the cytoplasm. In terms of biological role, associates with the EF-Tu.GDP complex and induces the exchange of GDP to GTP. It remains bound to the aminoacyl-tRNA.EF-Tu.GTP complex up to the GTP hydrolysis stage on the ribosome. This is Elongation factor Ts from Acholeplasma laidlawii (strain PG-8A).